We begin with the raw amino-acid sequence, 176 residues long: Large ribosomal subunit protein uL16 (176 aa).

This sequence belongs to the universal ribosomal protein uL16 family.

The protein is Large ribosomal subunit protein uL16 of Halorubrum lacusprofundi (strain ATCC 49239 / DSM 5036 / JCM 8891 / ACAM 34).